The sequence spans 324 residues: NADH-ubiquinone oxidoreductase chain 1 (324 aa).

Helical transmembrane passes span 9–29, 75–95, 106–126, 146–166, 177–197, 228–248, 259–279, and 299–319; these read LINP…LTLI, FLFL…WAPM, LGIL…LGSG, ISYE…SGGY, SIWL…STLA, LFFL…AVLF, ELTT…FLWV, and FLPL…ALAG.

It belongs to the complex I subunit 1 family.

Its subcellular location is the mitochondrion inner membrane. The catalysed reaction is a ubiquinone + NADH + 5 H(+)(in) = a ubiquinol + NAD(+) + 4 H(+)(out). Core subunit of the mitochondrial membrane respiratory chain NADH dehydrogenase (Complex I) that is believed to belong to the minimal assembly required for catalysis. Complex I functions in the transfer of electrons from NADH to the respiratory chain. The immediate electron acceptor for the enzyme is believed to be ubiquinone. The polypeptide is NADH-ubiquinone oxidoreductase chain 1 (MT-ND1) (Cyprinus carpio (Common carp)).